Reading from the N-terminus, the 347-residue chain is Ubiquitin thioesterase Otu1 (347 aa).

The Ubiquitin-like domain maps to Phe5–Ala87. A UBX-like region spans residues Lys8–Ala89. One can recognise an OTU domain in the interval Leu150–Glu274. The interval Val155–Cys161 is cys-loop. Asp158 is an active-site residue. Cys161 (nucleophile) is an active-site residue. Residues Ile213 to Ile223 are variable-loop. Residues Phe263–His267 form a his-loop region. Ile266 serves as a coordination point for substrate. His267 is an active-site residue. An S2 site region spans residues Leu290–Gln295. The segment at Leu317–His341 adopts a C2H2-type zinc-finger fold. The active site involves His341.

The catalysed reaction is Thiol-dependent hydrolysis of ester, thioester, amide, peptide and isopeptide bonds formed by the C-terminal Gly of ubiquitin (a 76-residue protein attached to proteins as an intracellular targeting signal).. Hydrolase that can remove conjugated ubiquitin from proteins and may therefore play an important regulatory role at the level of protein turnover by preventing degradation. Involved in the regulation of DNA damage repair. This is Ubiquitin thioesterase Otu1 from Drosophila melanogaster (Fruit fly).